The chain runs to 316 residues: tRNA dimethylallyltransferase (316 aa).

An ATP-binding site is contributed by 17–24 (GPTASGKT). 19 to 24 (TASGKT) provides a ligand contact to substrate. Interaction with substrate tRNA stretches follow at residues 42–45 (DSAL), 166–170 (QRLSR), 247–252 (RCVGYR), and 280–287 (KRQITWLR).

It belongs to the IPP transferase family. In terms of assembly, monomer. Mg(2+) is required as a cofactor.

It catalyses the reaction adenosine(37) in tRNA + dimethylallyl diphosphate = N(6)-dimethylallyladenosine(37) in tRNA + diphosphate. Catalyzes the transfer of a dimethylallyl group onto the adenine at position 37 in tRNAs that read codons beginning with uridine, leading to the formation of N6-(dimethylallyl)adenosine (i(6)A). This Escherichia coli O81 (strain ED1a) protein is tRNA dimethylallyltransferase.